The chain runs to 432 residues: Adenylosuccinate synthetase (432 aa).

GTP-binding positions include 13–19 and 41–43; these read GDEGKGK and GHT. Asp14 functions as the Proton acceptor in the catalytic mechanism. Residues Asp14 and Gly41 each coordinate Mg(2+). IMP is bound by residues 14 to 17, 39 to 42, Thr130, Arg144, Gln225, Thr240, and Arg304; these read DEGK and NAGH. The active-site Proton donor is His42. 300–306 is a binding site for substrate; the sequence is ATTGRRR. Residues Arg306, 332–334, and 415–417 contribute to the GTP site; these read KLD and STG.

It belongs to the adenylosuccinate synthetase family. Homodimer. Mg(2+) is required as a cofactor.

The protein resides in the cytoplasm. It carries out the reaction IMP + L-aspartate + GTP = N(6)-(1,2-dicarboxyethyl)-AMP + GDP + phosphate + 2 H(+). It participates in purine metabolism; AMP biosynthesis via de novo pathway; AMP from IMP: step 1/2. In terms of biological role, plays an important role in the de novo pathway of purine nucleotide biosynthesis. Catalyzes the first committed step in the biosynthesis of AMP from IMP. This chain is Adenylosuccinate synthetase, found in Sodalis glossinidius (strain morsitans).